Consider the following 621-residue polypeptide: Chaperone protein HscA homolog (621 aa).

This sequence belongs to the heat shock protein 70 family.

Functionally, chaperone involved in the maturation of iron-sulfur cluster-containing proteins. Has a low intrinsic ATPase activity which is markedly stimulated by HscB. The protein is Chaperone protein HscA homolog of Polynucleobacter asymbioticus (strain DSM 18221 / CIP 109841 / QLW-P1DMWA-1) (Polynucleobacter necessarius subsp. asymbioticus).